The sequence spans 670 residues: Auxin response factor 16 (670 aa).

Positions 120–222 form a DNA-binding region, TF-B3; that stretch reads FAKTLTQSDA…DLCVGIRRAK (103 aa). The segment covering 545–557 has biased composition (polar residues); that stretch reads KTQISSGGSNQNG. The segment at 545–579 is disordered; it reads KTQISSGGSNQNGVAGREFSSSDEGSPCSKKVHDA. The PB1 domain occupies 584–664; the sequence is TGHCKVFMES…RRLTILTEQG (81 aa).

This sequence belongs to the ARF family. Homodimers and heterodimers.

It is found in the nucleus. Auxin response factors (ARFs) are transcriptional factors that bind specifically to the DNA sequence 5'-TGTCTC-3' found in the auxin-responsive promoter elements (AuxREs). Could act as transcriptional activator or repressor. Formation of heterodimers with Aux/IAA proteins may alter their ability to modulate early auxin response genes expression. The chain is Auxin response factor 16 (ARF16) from Arabidopsis thaliana (Mouse-ear cress).